Reading from the N-terminus, the 430-residue chain is GPI mannosyltransferase 1 (430 aa).

The Cytoplasmic portion of the chain corresponds to 1 to 11 (MELQSLIDTVS). A helical transmembrane segment spans residues 12 to 32 (LQKLLLLGALLRLILIAYAFF). Over 33–72 (HDQWFRVKYTDIDYMIVVDGARHMWNGGSPFDRTTFRYTP) the chain is Lumenal. A helical transmembrane segment spans residues 73–93 (LLAALVMPSIWIANPMGKLIF). Over 94-115 (ASSDLGAAWYCYGVLKSFAKER) the chain is Cytoplasmic. The chain crosses the membrane as a helical span at residues 116–136 (SAKWMVSLFILFNPIVLSVST). Residues 137–163 (RGNSDMLVTFMSLMVLSKFARRKCYQA) lie on the Lumenal side of the membrane. A helical transmembrane segment spans residues 164 to 184 (AAVLGFAVHFKIYPIIYALPL). Residues 185-206 (TLGVWEQSVAASTNTWRRVVKT) are Cytoplasmic-facing. A helical transmembrane segment spans residues 207 to 227 (AVVVSICALMAAISFAVPTVL). Over 228–360 (CYMKYGQQYL…AFKFFSWVKA (133 aa)) the chain is Lumenal. The chain crosses the membrane as a helical span at residues 361–381 (LGVVLMWAATIPLWVTTAVPL). The Cytoplasmic portion of the chain corresponds to 382–388 (EFHGYSD). Residues 389-409 (FAQLWIVSCLFFLAMVVLASM) traverse the membrane as a helical segment. At 410 to 430 (LARIAYRVQCTKCSAKSIKVA) the chain is on the lumenal side.

This sequence belongs to the PIGM family.

The protein resides in the endoplasmic reticulum membrane. Its pathway is glycolipid biosynthesis; glycosylphosphatidylinositol-anchor biosynthesis. Mannosyltransferase involved in glycosylphosphatidylinositol-anchor biosynthesis. Transfers the first alpha-1,4-mannose to GlcN-PI during GPI precursor assembly. This chain is GPI mannosyltransferase 1 (PIGM), found in Trypanosoma brucei brucei (strain 927/4 GUTat10.1).